A 700-amino-acid polypeptide reads, in one-letter code: Autophagy-related protein 13 (700 aa).

Residues 319-352 (GSINSSSSPPPGATQSNQSVSSFSTSKPIPVTLN) form a disordered region. The segment covering 332-344 (TQSNQSVSSFSTS) has biased composition (low complexity). Residues 399 to 407 (SSFGSRFRT) form an ATG17-binding region. The ATG1-binding stretch occupies residues 428 to 487 (TPNNPILHNFRSRNKSPSVSSTELGPSSSIYMDDDLDSFMKMLDSKPDLRFPSNSPSVYE). Polar residues predominate over residues 506 to 532 (EQQQHGSPSSNQIMIHSQSQTSQSQVF). Disordered stretches follow at residues 506-562 (EQQQ…PGVS), 576-637 (HASS…NPEL), and 649-700 (ESDD…NQEF). Positions 595–631 (SSPPASATAVATVHNSLRRLTSSSQRTNTNSTNSSTR) are enriched in low complexity. The segment covering 656-667 (DEHSPRSTDTKS) has biased composition (basic and acidic residues).

Belongs to the ATG13 family. Fungi subfamily. Hypophosphorylated form interacts with ATG1 to form the ATG1-ATG13 kinase complex. The ATG1-ATG13 complex interacts with the ATG17-ATG29-ATG31 complex through direct interaction with ATG17. Interacts with VAC8.

The protein localises to the cytoplasm. It is found in the preautophagosomal structure. In terms of biological role, activates the ATG1 kinase in a nutritional condition dependent manner through the TOR pathway, leading to autophagy. Involved in ATG9 and ATG23 cycling through the pre-autophagosomal structure. Also involved in cytoplasm to vacuole transport (Cvt) and more specifically in Cvt vesicle formation. Seems to play a role in the switching machinery regulating the conversion between the Cvt pathway and autophagy. Finally, ATG13 is also required for glycogen storage during stationary phase. Acts as a negative regulator of xylose alcoholic fermentation, a role that is not related to autophagy. The protein is Autophagy-related protein 13 of Ogataea parapolymorpha (strain ATCC 26012 / BCRC 20466 / JCM 22074 / NRRL Y-7560 / DL-1) (Yeast).